The chain runs to 372 residues: Oxidoreductase ptaL (372 aa).

An N-terminal signal peptide occupies residues 1-16 (MKHIVIIGGGFAGVST). 6-hydroxy-FAD is bound by residues 8–12 (GGGFA) and Arg51. Asn251 carries N-linked (GlcNAc...) asparagine glycosylation. Residue Asp285 coordinates 6-hydroxy-FAD.

It belongs to the FAD-dependent oxidoreductase family. It depends on 6-hydroxy-FAD as a cofactor.

Its pathway is secondary metabolite biosynthesis. Functionally, oxidoreductase; part of the gene cluster that mediates the biosynthesis of pestheic acid, a diphenyl ether which is a biosynthetic precursor of the unique chloropupukeananes. The biosynthesis initiates from condensation of acetate and malonate units catalyzed by the non-reducing PKS ptaA. As the ptaA protein is TE/CLC domain-deficient, hydrolysis and Claisen cyclization of the polyketide could be catalyzed by ptaB containing a beta-lactamase domain. The ptaB protein might hydrolyze the thioester bond between the ACP of ptaA and the intermediate to release atrochrysone carboxylic acid, which is spontaneously dehydrated to form endocrocin anthrone. Endocrocin anthrone is then converted to endocrocin, catalyzed by the anthrone oxygenase ptaC. Spontaneous decarboxylation of endocrocin occurs to generate emodin. An O-methyltransferase (ptaH or ptaI) could methylate emodin to form physcion. PtaJ could then catalyze the oxidative cleavage of physcion, and rotation of the intermediate could then afford desmethylisosulochrin. PtaF, a putative NADH-dependent oxidoreductase, might also participate in the oxidative cleavage step. Desmethylisosulochrin is then transformed by another O-methyltransferase (ptaH or ptaI) to form isosulochrin. Chlorination of isosulochrin by ptaM in the cyclohexadienone B ring then produces chloroisosulochrin. PtaE is responsible for the oxidative coupling reactions of both benzophenones isosulochrin and chloroisosulochrin to RES-1214-1 and pestheic acid respectively, regardless of chlorination. The sequence is that of Oxidoreductase ptaL from Pestalotiopsis fici (strain W106-1 / CGMCC3.15140).